We begin with the raw amino-acid sequence, 378 residues long: Chaperone protein DnaJ (378 aa).

A J domain is found at 5–70; that stretch reads DYYEVLGLQK…EKRAMYDQYG (66 aa). Residues 135–213 form a CR-type zinc finger; sequence GVKKDIRIRT…CHGDGRVEKT (79 aa). Positions 148, 151, 165, 168, 187, 190, 201, and 204 each coordinate Zn(2+). CXXCXGXG motif repeat units follow at residues 148 to 155, 165 to 172, 187 to 194, and 201 to 208; these read CDTCHGSG, CPHCHGSG, CPSCHGTG, and CKSCHGDG.

Belongs to the DnaJ family. In terms of assembly, homodimer. Zn(2+) is required as a cofactor.

The protein localises to the cytoplasm. Its function is as follows. Participates actively in the response to hyperosmotic and heat shock by preventing the aggregation of stress-denatured proteins and by disaggregating proteins, also in an autonomous, DnaK-independent fashion. Unfolded proteins bind initially to DnaJ; upon interaction with the DnaJ-bound protein, DnaK hydrolyzes its bound ATP, resulting in the formation of a stable complex. GrpE releases ADP from DnaK; ATP binding to DnaK triggers the release of the substrate protein, thus completing the reaction cycle. Several rounds of ATP-dependent interactions between DnaJ, DnaK and GrpE are required for fully efficient folding. Also involved, together with DnaK and GrpE, in the DNA replication of plasmids through activation of initiation proteins. This is Chaperone protein DnaJ from Glaesserella parasuis serovar 5 (strain SH0165) (Haemophilus parasuis).